Here is a 426-residue protein sequence, read N- to C-terminus: 26S proteasome regulatory subunit 7 homolog A (426 aa).

209 to 216 lines the ATP pocket; sequence GPPGTGKT. Glycyl lysine isopeptide (Lys-Gly) (interchain with G-Cter in ubiquitin) cross-links involve residues lysine 400 and lysine 415.

Belongs to the AAA ATPase family. Component of the 19S regulatory particle (RP/PA700) base subcomplex of the 26S proteasome. The 26S proteasome is composed of a core protease (CP), known as the 20S proteasome, capped at one or both ends by the 19S regulatory particle (RP/PA700). The RP/PA700 complex is composed of at least 17 different subunits in two subcomplexes, the base and the lid, which form the portions proximal and distal to the 20S proteolytic core, respectively.

It localises to the cytoplasm. Its subcellular location is the nucleus. Functionally, the 26S proteasome is involved in the ATP-dependent degradation of ubiquitinated proteins. The regulatory (or ATPase) complex confers ATP dependency and substrate specificity to the 26S complex. The chain is 26S proteasome regulatory subunit 7 homolog A (RPT1A) from Arabidopsis thaliana (Mouse-ear cress).